A 323-amino-acid polypeptide reads, in one-letter code: Beta-ketoacyl-[acyl-carrier-protein] synthase III (323 aa).

Residues cysteine 112 and histidine 249 contribute to the active site. The ACP-binding stretch occupies residues 250–254 (QANYR). Residue asparagine 279 is part of the active site.

The protein belongs to the thiolase-like superfamily. FabH family. Homodimer.

The protein resides in the cytoplasm. It catalyses the reaction malonyl-[ACP] + acetyl-CoA + H(+) = 3-oxobutanoyl-[ACP] + CO2 + CoA. It functions in the pathway lipid metabolism; fatty acid biosynthesis. In terms of biological role, catalyzes the condensation reaction of fatty acid synthesis by the addition to an acyl acceptor of two carbons from malonyl-ACP. Catalyzes the first condensation reaction which initiates fatty acid synthesis and may therefore play a role in governing the total rate of fatty acid production. Possesses both acetoacetyl-ACP synthase and acetyl transacylase activities. Its substrate specificity determines the biosynthesis of branched-chain and/or straight-chain of fatty acids. The chain is Beta-ketoacyl-[acyl-carrier-protein] synthase III from Clostridium kluyveri (strain NBRC 12016).